Here is a 902-residue protein sequence, read N- to C-terminus: Gamma-tubulin complex component 2 (902 aa).

The residue at position 83 (Tyr83) is a Phosphotyrosine. Positions 875–902 are disordered; it reads ERSQKAAPQVPVLRGPPAPAPRVAVTAQ.

This sequence belongs to the TUBGCP family. As to quaternary structure, component of the gamma-tubulin ring complex (gTuRC) consisting of TUBGCP2, TUBGCP3, TUBGCP4, TUBGCP5 and TUBGCP6 and gamma-tubulin TUBG1 or TUBG2. TUBGCP2, TUBGCP3, TUBGCP4, TUBGCP5 and TUBGCP6 assemble in a 5:5:2:1:1 stoichiometry; each is associated with a gamma-tubulin, thereby arranging 14 gamma-tubulins in a helical manner. Gamma-tubulin at the first position is blocked by TUBGCP3 at the last position, allowing 13 protafilaments to grow into a microtubule. The gTuRC (via TUBGCP3 and TUBGCP6) interacts with ACTB and MZT1; the interactions form a luminal bridge that stabilizes the initial structure during complex assembly. The gTuRC (via TUBGCP2) interacts with MZT2A/MZT2B and CDK5RAP2 (via CM1 motif); the interactions play a role in gTuRC activation. Interacts with ATF5; the ATF5:PCNT:polyglutamylated tubulin (PGT) tripartite unites the mother centriole and the pericentriolar material (PCM) in the centrosome.

The protein resides in the cytoplasm. It localises to the cytoskeleton. Its subcellular location is the microtubule organizing center. It is found in the centrosome. Functionally, component of the gamma-tubulin ring complex (gTuRC) which mediates microtubule nucleation. The gTuRC regulates the minus-end nucleation of alpha-beta tubulin heterodimers that grow into microtubule protafilaments, a critical step in centrosome duplication and spindle formation. Plays a role in neuronal migration. This chain is Gamma-tubulin complex component 2 (TUBGCP2), found in Pongo abelii (Sumatran orangutan).